The sequence spans 29 residues: NADP phosphatase 1 (29 aa).

In terms of assembly, homodimer.

Its subcellular location is the cytoplasm. This Arthrobacter sp. (strain KM) protein is NADP phosphatase 1.